The primary structure comprises 239 residues: Homeobox-leucine zipper protein HOX12 (239 aa).

The segment at 22–65 is disordered; it reads PEAATSGGEQKKARQRRRRKVKPEAAAALAGESGGDEQAKKRRL. A DNA-binding region (homeobox) is located at residues 58–117; sequence EQAKKRRLSDEQARFLEMSFKKERKLETPRKVQLAAELGLDAKQVAVWFQNRRARHKSKL. Positions 107-168 form a coiled coil; the sequence is QNRRARHKSK…KLAAVAAATT (62 aa).

Belongs to the HD-ZIP homeobox family. Class I subfamily. In terms of tissue distribution, expressed in seedlings, roots, stems, leaf sheaths and panicles.

Its subcellular location is the nucleus. In terms of biological role, probable transcription factor. The chain is Homeobox-leucine zipper protein HOX12 (HOX12) from Oryza sativa subsp. indica (Rice).